Reading from the N-terminus, the 280-residue chain is Nitrogenase iron protein (280 aa).

8–15 (GKGGIGKS) is an ATP binding site. Cys95 contacts [4Fe-4S] cluster. The residue at position 98 (Arg98) is an ADP-ribosylarginine; by dinitrogenase reductase ADP-ribosyltransferase. [4Fe-4S] cluster is bound at residue Cys128.

It belongs to the NifH/BchL/ChlL family. In terms of assembly, homodimer. It depends on [4Fe-4S] cluster as a cofactor. The reversible ADP-ribosylation of Arg-98 inactivates the nitrogenase reductase and regulates nitrogenase activity.

The catalysed reaction is N2 + 8 reduced [2Fe-2S]-[ferredoxin] + 16 ATP + 16 H2O = H2 + 8 oxidized [2Fe-2S]-[ferredoxin] + 2 NH4(+) + 16 ADP + 16 phosphate + 6 H(+). The key enzymatic reactions in nitrogen fixation are catalyzed by the nitrogenase complex, which has 2 components: the iron protein and the molybdenum-iron protein. The sequence is that of Nitrogenase iron protein from Methanospirillum hungatei JF-1 (strain ATCC 27890 / DSM 864 / NBRC 100397 / JF-1).